We begin with the raw amino-acid sequence, 231 residues long: Orotidine 5'-phosphate decarboxylase (231 aa).

Residues aspartate 11, lysine 33, 60–69 (DLKLHDIPNT), threonine 117, arginine 179, glutamine 187, glycine 207, and arginine 208 contribute to the substrate site. Residue lysine 62 is the Proton donor of the active site.

It belongs to the OMP decarboxylase family. Type 1 subfamily. Homodimer.

The catalysed reaction is orotidine 5'-phosphate + H(+) = UMP + CO2. Its pathway is pyrimidine metabolism; UMP biosynthesis via de novo pathway; UMP from orotate: step 2/2. Its function is as follows. Catalyzes the decarboxylation of orotidine 5'-monophosphate (OMP) to uridine 5'-monophosphate (UMP). The protein is Orotidine 5'-phosphate decarboxylase of Ehrlichia chaffeensis (strain ATCC CRL-10679 / Arkansas).